Here is a 276-residue protein sequence, read N- to C-terminus: Type II pantothenate kinase (276 aa).

8–15 (DAGGTLTK) provides a ligand contact to ATP. E76 serves as the catalytic Proton acceptor. ATP-binding positions include T105, 127–131 (GGTIM), F143, and S230.

This sequence belongs to the type II pantothenate kinase family. In terms of assembly, homodimer.

The protein resides in the cytoplasm. It carries out the reaction (R)-pantothenate + ATP = (R)-4'-phosphopantothenate + ADP + H(+). The protein operates within cofactor biosynthesis; coenzyme A biosynthesis; CoA from (R)-pantothenate: step 1/5. In terms of biological role, catalyzes the phosphorylation of pantothenate (Pan), the first step in CoA biosynthesis. The chain is Type II pantothenate kinase from Bacillus cereus (strain ZK / E33L).